A 115-amino-acid chain; its full sequence is NADH-ubiquinone oxidoreductase chain 3 (115 aa).

3 helical membrane-spanning segments follow: residues 4–24, 55–75, and 87–107; these read LLAM…AFWL, FFLV…LLPI, and MMLT…YEWI.

This sequence belongs to the complex I subunit 3 family. As to quaternary structure, core subunit of respiratory chain NADH dehydrogenase (Complex I) which is composed of 45 different subunits. Interacts with TMEM186. Interacts with TMEM242.

It localises to the mitochondrion inner membrane. The catalysed reaction is a ubiquinone + NADH + 5 H(+)(in) = a ubiquinol + NAD(+) + 4 H(+)(out). Its function is as follows. Core subunit of the mitochondrial membrane respiratory chain NADH dehydrogenase (Complex I) which catalyzes electron transfer from NADH through the respiratory chain, using ubiquinone as an electron acceptor. Essential for the catalytic activity of complex I. This chain is NADH-ubiquinone oxidoreductase chain 3, found in Neotoma floridana (Eastern woodrat).